The chain runs to 366 residues: Sodium-potassium/proton antiporter ChaA (366 aa).

Residues 1-16 (MSNAQEAVKTRHKETS) are Cytoplasmic-facing. 2 helical membrane-spanning segments follow: residues 17-37 (LIFP…QTLP) and 38-58 (VVIA…FSVV). Topologically, residues 59-74 (RHADVLAHRLGEPYGS) are cytoplasmic. The chain crosses the membrane as a helical span at residues 75–95 (LILSLSVVILEVSLISALMAT). Residues 96–106 (GDAAPTLMRDT) lie on the Periplasmic side of the membrane. A helical membrane pass occupies residues 107–127 (LYSIIMIVTGGLVGFSLLLGG). Over 128-143 (RKFATQYMNLFGIKQY) the chain is Cytoplasmic. Residues 144-164 (LIALFPLAIIVLVFPMALPAA) traverse the membrane as a helical segment. At 165 to 167 (NFS) the chain is on the periplasmic side. The chain crosses the membrane as a helical span at residues 168 to 188 (TGQALLVALISAAMYGVFLLI). The Cytoplasmic segment spans residues 189–216 (QTKTHQSLFVYEHEDDSDDDDPHHGKPS). Residues 217–237 (AHSSLWHAIWLIIHLIAVIAV) traverse the membrane as a helical segment. The Periplasmic portion of the chain corresponds to 238-255 (TKMNASSLETLLDSMNAP). Residues 256 to 276 (VAFTGFLVALLILSPEGLGAL) form a helical membrane-spanning segment. Residues 277 to 290 (KAVLNNQVQRAMNL) lie on the Cytoplasmic side of the membrane. Residues 291–311 (FFGSVLATISLTVPVVTLIAF) traverse the membrane as a helical segment. The Periplasmic portion of the chain corresponds to 312 to 318 (MTGNELQ). A helical membrane pass occupies residues 319–339 (FALGAPEMVVMVASLVLCHIS). The Cytoplasmic segment spans residues 340–345 (FSTGRT). A helical membrane pass occupies residues 346 to 366 (NVLNGAAHLALFAAYLMTIFA).

This sequence belongs to the Ca(2+):cation antiporter (CaCA) (TC 2.A.19) family.

The protein localises to the cell inner membrane. It carries out the reaction Na(+)(in) + H(+)(out) = Na(+)(out) + H(+)(in). It catalyses the reaction K(+)(in) + H(+)(out) = K(+)(out) + H(+)(in). The enzyme catalyses Ca(2+)(in) + H(+)(out) = Ca(2+)(out) + H(+)(in). With respect to regulation, pronounced pH dependence with sodium as substrate. Ca(2+)/H(+) and Na(+)/H(+) antiporter activities are both inhibited by magnesium. Ca(2+)/H(+) activity is inhibited by the proton ionophore carbonyl cyanide m-chlorophenylhydrazone (CCCP). In terms of biological role, sodium exporter that functions mainly at alkaline pH. Can also function as a potassium/proton and calcium/proton antiporter at alkaline pH. Does not play a major role in calcium export. The K(+)/H(+) antiporter activity may enable E.coli to adapt to K(+) salinity stress and to maintain K(+) homeostasis. The protein is Sodium-potassium/proton antiporter ChaA of Escherichia coli (strain K12).